The following is a 348-amino-acid chain: MKLLGLLISAFGAINALKIKALYLSCDYELRPYNAVIDSQCMAFALNGSNIHEAIRYLNAMNIDKAYVLYWNDHDLHQNPMVLHKNGALAPFDRYTNTAKHVLCVEACSCPGPQSRPVVCPENNGASVSSPCPPCGQGNNTTVCDKVVVNPQPVKPLPAPCTPCAPCESSSSEKSESKECMTFPRICKKKCGPRHGRSPKKVEIVKSQKTYTFDIERYKRRGDVVVRVCSQDCKDKFEKFVLTKTGEIRKGKDKKCIPEPLPECLQCPKNLYKLKSGIEAKVCSEVCMYINSKCEIFVLIGDCDFYKVVMNERRRKQSSFHLKKIRGQKLRELIRQGLFGVEFSPLKC.

A signal peptide spans 1–16 (MKLLGLLISAFGAINA). N47, N139, and N140 each carry an N-linked (GlcNAc...) asparagine glycan. The HBM1 motif lies at 193–198 (PRHGRS). Positions 248-256 (IRKGKDKKC) match the HBM2 motif. The HBM3 signature appears at 322–327 (LKKIRG).

It is found in the spore wall. It localises to the spore. The protein localises to the perispore. Functionally, spore wall protein involved in the adhesion to host cells surface glycoaminoglycans (GAGs). Microsporidian spore adherence is an integral part of activation and host cell infection. This is Spore wall and anchoring disk complex protein EnP1 (EnP1) from Encephalitozoon intestinalis (Microsporidian parasite).